Here is a 127-residue protein sequence, read N- to C-terminus: NADPH-dependent 7-cyano-7-deazaguanine reductase (127 aa).

C40 functions as the Thioimide intermediate in the catalytic mechanism. Residue D47 is the Proton donor of the active site. Substrate is bound by residues 62–64 (VEL) and 81–82 (HE).

The protein belongs to the GTP cyclohydrolase I family. QueF type 1 subfamily.

It localises to the cytoplasm. It carries out the reaction 7-aminomethyl-7-carbaguanine + 2 NADP(+) = 7-cyano-7-deazaguanine + 2 NADPH + 3 H(+). The protein operates within tRNA modification; tRNA-queuosine biosynthesis. Catalyzes the NADPH-dependent reduction of 7-cyano-7-deazaguanine (preQ0) to 7-aminomethyl-7-deazaguanine (preQ1). The chain is NADPH-dependent 7-cyano-7-deazaguanine reductase from Campylobacter jejuni (strain RM1221).